The chain runs to 302 residues: Large ribosomal subunit protein uL3c (302 aa).

The N-terminal 36 residues, 1–36 (MFQSSRLVALGLCAALVLVGGSIILSGLSPNLSSPM), are a transit peptide targeting the chloroplast. The disordered stretch occupies residues 208-239 (FQGSIRRWGMKRGPMSHGSKSHRQHGSIGCSA).

Belongs to the universal ribosomal protein uL3 family. Part of the 50S ribosomal subunit.

The protein localises to the plastid. It localises to the chloroplast. Functionally, one of the primary rRNA binding proteins, it binds directly near the 3'-end of the 23S rRNA, where it nucleates assembly of the 50S subunit. This chain is Large ribosomal subunit protein uL3c (RPL3), found in Bigelowiella natans (Pedinomonas minutissima).